The sequence spans 634 residues: Chaperone protein HtpG (634 aa).

The segment at 1-342 (MSVETQKETL…SNDLSLNVSR (342 aa)) is a; substrate-binding. The b stretch occupies residues 343 to 559 (EILQKDPVID…EQDLGLQMRQ (217 aa)). The segment at 560 to 634 (ILEASGQKVP…LNKLLVELSA (75 aa)) is c.

It belongs to the heat shock protein 90 family. In terms of assembly, homodimer.

Its subcellular location is the cytoplasm. Its function is as follows. Molecular chaperone. Has ATPase activity. This Ectopseudomonas mendocina (strain ymp) (Pseudomonas mendocina) protein is Chaperone protein HtpG.